Reading from the N-terminus, the 169-residue chain is Large ribosomal subunit protein uL10 (169 aa).

This sequence belongs to the universal ribosomal protein uL10 family. Part of the 50S ribosomal subunit.

This chain is Large ribosomal subunit protein uL10 (rplJ), found in Deinococcus radiodurans (strain ATCC 13939 / DSM 20539 / JCM 16871 / CCUG 27074 / LMG 4051 / NBRC 15346 / NCIMB 9279 / VKM B-1422 / R1).